The following is a 326-amino-acid chain: 4-hydroxythreonine-4-phosphate dehydrogenase (326 aa).

Substrate is bound by residues H130 and T131. A divalent metal cation is bound by residues H160, H205, and H260. Substrate is bound by residues K268, N277, and R286.

This sequence belongs to the PdxA family. As to quaternary structure, homodimer. The cofactor is Zn(2+). It depends on Mg(2+) as a cofactor. Co(2+) serves as cofactor.

The protein localises to the cytoplasm. The catalysed reaction is 4-(phosphooxy)-L-threonine + NAD(+) = 3-amino-2-oxopropyl phosphate + CO2 + NADH. It functions in the pathway cofactor biosynthesis; pyridoxine 5'-phosphate biosynthesis; pyridoxine 5'-phosphate from D-erythrose 4-phosphate: step 4/5. Its function is as follows. Catalyzes the NAD(P)-dependent oxidation of 4-(phosphooxy)-L-threonine (HTP) into 2-amino-3-oxo-4-(phosphooxy)butyric acid which spontaneously decarboxylates to form 3-amino-2-oxopropyl phosphate (AHAP). In Aromatoleum aromaticum (strain DSM 19018 / LMG 30748 / EbN1) (Azoarcus sp. (strain EbN1)), this protein is 4-hydroxythreonine-4-phosphate dehydrogenase.